The chain runs to 173 residues: Ribosome maturation factor RimP (173 aa).

Belongs to the RimP family.

The protein resides in the cytoplasm. Its function is as follows. Required for maturation of 30S ribosomal subunits. This chain is Ribosome maturation factor RimP, found in Pelodictyon phaeoclathratiforme (strain DSM 5477 / BU-1).